The following is a 343-amino-acid chain: Glyceraldehyde-3-phosphate dehydrogenase (343 aa).

Residues 13 to 14 (TI) and Gly112 each bind NAD(+). Residue 141-143 (SCN) participates in D-glyceraldehyde 3-phosphate binding. The Nucleophile role is filled by Cys142. Arg170 contacts NAD(+). 196–197 (HA) provides a ligand contact to D-glyceraldehyde 3-phosphate. Gln303 lines the NAD(+) pocket.

This sequence belongs to the glyceraldehyde-3-phosphate dehydrogenase family. In terms of assembly, homotetramer.

It localises to the cytoplasm. The catalysed reaction is D-glyceraldehyde 3-phosphate + phosphate + NADP(+) = (2R)-3-phospho-glyceroyl phosphate + NADPH + H(+). The enzyme catalyses D-glyceraldehyde 3-phosphate + phosphate + NAD(+) = (2R)-3-phospho-glyceroyl phosphate + NADH + H(+). It functions in the pathway carbohydrate degradation; glycolysis; pyruvate from D-glyceraldehyde 3-phosphate: step 1/5. This is Glyceraldehyde-3-phosphate dehydrogenase (gap) from Aeropyrum pernix (strain ATCC 700893 / DSM 11879 / JCM 9820 / NBRC 100138 / K1).